Reading from the N-terminus, the 366-residue chain is Aminomethyltransferase (366 aa).

Belongs to the GcvT family. As to quaternary structure, the glycine cleavage system is composed of four proteins: P, T, L and H.

It catalyses the reaction N(6)-[(R)-S(8)-aminomethyldihydrolipoyl]-L-lysyl-[protein] + (6S)-5,6,7,8-tetrahydrofolate = N(6)-[(R)-dihydrolipoyl]-L-lysyl-[protein] + (6R)-5,10-methylene-5,6,7,8-tetrahydrofolate + NH4(+). In terms of biological role, the glycine cleavage system catalyzes the degradation of glycine. The protein is Aminomethyltransferase of Bacillus cereus (strain B4264).